The following is a 469-amino-acid chain: MVALTDPDLLFPPEAHSRSLARDLYAGIKDLPIVSPHGHTDPRWYALNEPFPDPAQLLIVPDHYIFRMLFSQGVRLEDLGVASLDGAPVETDGRTIWRRFAEHYYLFRGTPTRLWFDHVLAHLFGIEEPLDATTADRHYDTIATVLQWENFRPRALFERFNIEVIATTEGALDDLEWHKMIRDSGWEGRVVTAYRPDAVVDPDFEGFSANLDRLGEITGCDTGSWAGYLDAHRQRRAFFKSFGATSSDHGHPTAETANLSDAAAQELFNRIRRGSQDERERKLFRAQMLTEMAKMSRDDGLVLQIHPGSWRNHSPSVFQRFGRDKGFDIPTRTDYVTALKPLLDCVGLERDLTVILFTLDESSYARELAPLAGVYPALKLGPAWWFHDSPEGMRRFREMTTETAGFYNTVGFNDDTRAFPSIPARHDVARRVDCAFLARLVAEHRLREDEAHELARELAHTLAKKAYRL.

It belongs to the metallo-dependent hydrolases superfamily. Uronate isomerase family.

It carries out the reaction D-glucuronate = D-fructuronate. It catalyses the reaction aldehydo-D-galacturonate = keto-D-tagaturonate. The protein operates within carbohydrate metabolism; pentose and glucuronate interconversion. The polypeptide is Uronate isomerase (Mesorhizobium japonicum (strain LMG 29417 / CECT 9101 / MAFF 303099) (Mesorhizobium loti (strain MAFF 303099))).